The chain runs to 454 residues: CBL-interacting protein kinase 33 (454 aa).

The region spanning 13-268 (YELGRTIGEG…IPEILEDEWF (256 aa)) is the Protein kinase domain. Residues 19 to 27 (IGEGTFAKV) and K42 contribute to the ATP site. The Proton acceptor role is filled by D136. The activation loop stretch occupies residues 154-183 (DFGLSALSQQIKDDGLLHTTCGTPNYVAPE). Residues 305 to 329 (EEPEALNAFELISMSAGLNLGNLFD) form the NAF domain. The tract at residues 335–364 (KRETRFTSKCPPKEIVRKIEEAAKPLGFDV) is PPI.

This sequence belongs to the protein kinase superfamily. CAMK Ser/Thr protein kinase family. SNF1 subfamily. The cofactor is Mn(2+).

It carries out the reaction L-seryl-[protein] + ATP = O-phospho-L-seryl-[protein] + ADP + H(+). The enzyme catalyses L-threonyl-[protein] + ATP = O-phospho-L-threonyl-[protein] + ADP + H(+). In terms of biological role, CIPK serine-threonine protein kinases interact with CBL proteins. Binding of a CBL protein to the regulatory NAF domain of CIPK protein lead to the activation of the kinase in a calcium-dependent manner. This chain is CBL-interacting protein kinase 33 (CIPK33), found in Oryza sativa subsp. japonica (Rice).